Consider the following 403-residue polypeptide: tRNA pseudouridine synthase 4 (403 aa).

Asp75 (nucleophile) is an active-site residue.

The protein belongs to the pseudouridine synthase TruB family.

It localises to the nucleus. Its subcellular location is the mitochondrion. It carries out the reaction uridine(55) in tRNA = pseudouridine(55) in tRNA. The catalysed reaction is a uridine in mRNA = a pseudouridine in mRNA. In terms of biological role, responsible for synthesis of pseudouridine from uracil-55 in the psi GC loop of transfer RNAs. Also catalyzes pseudouridylation of mRNAs with the consensus sequence 5'-GGUUCRA-3'. This chain is tRNA pseudouridine synthase 4 (PUS4), found in Saccharomyces cerevisiae (strain ATCC 204508 / S288c) (Baker's yeast).